A 341-amino-acid polypeptide reads, in one-letter code: S-adenosylmethionine:tRNA ribosyltransferase-isomerase (341 aa).

The protein belongs to the QueA family. In terms of assembly, monomer.

Its subcellular location is the cytoplasm. The catalysed reaction is 7-aminomethyl-7-carbaguanosine(34) in tRNA + S-adenosyl-L-methionine = epoxyqueuosine(34) in tRNA + adenine + L-methionine + 2 H(+). The protein operates within tRNA modification; tRNA-queuosine biosynthesis. Transfers and isomerizes the ribose moiety from AdoMet to the 7-aminomethyl group of 7-deazaguanine (preQ1-tRNA) to give epoxyqueuosine (oQ-tRNA). The sequence is that of S-adenosylmethionine:tRNA ribosyltransferase-isomerase from Clostridioides difficile (strain 630) (Peptoclostridium difficile).